The following is a 278-amino-acid chain: Large ribosomal subunit protein uL2c (278 aa).

A disordered region spans residues 224 to 256 (NPVDHPHGGGEGRAPIGRKKPTTPWGYPALGRK).

Belongs to the universal ribosomal protein uL2 family. In terms of assembly, part of the 50S ribosomal subunit.

The protein localises to the plastid. The sequence is that of Large ribosomal subunit protein uL2c (rpl2) from Cuscuta exaltata (Tall dodder).